Reading from the N-terminus, the 75-residue chain is Putative sulfur carrier protein TsuB (75 aa).

C13 acts as the Cysteine persulfide intermediate in catalysis.

Belongs to the sulfur carrier protein TusA family.

In terms of biological role, involved in thiosulfate metabolism. The chain is Putative sulfur carrier protein TsuB from Escherichia coli (strain K12).